The following is a 694-amino-acid chain: DNA-binding protein RFX2 (694 aa).

The segment at residues 174–249 (HLQWLLDNYE…YHYYGIRLKP (76 aa)) is a DNA-binding region (RFX-type winged-helix). Disordered regions lie at residues 267-310 (QQPI…QHHQ) and 658-694 (KDDV…MQEM). The segment covering 289–299 (PANSSQHASPE) has biased composition (polar residues). The segment covering 300–310 (QSVAAQSQHHQ) has biased composition (low complexity).

Belongs to the RFX family. Homodimer. Heterodimer; heterodimerizes with other rfx proteins. In terms of tissue distribution, preferentially expressed in ciliated tissues, such as neural tube, gastrocoel roof plate, epidermal multiciliated cells, otic vesicles and kidneys.

The protein resides in the nucleus. It localises to the cytoplasm. Functionally, transcription factor that acts as a key regulator of ciliogenesis. Specifically regulates expression of genes required for cilium assembly and function. Recognizes and binds the X-box, a regulatory motif with DNA sequence 5'-GTNRCC(0-3N)RGYAAC-3' present on promoters. Required for neural tube closure and neural ciliogenesis. The chain is DNA-binding protein RFX2 (rfx2) from Xenopus laevis (African clawed frog).